We begin with the raw amino-acid sequence, 351 residues long: Glycerol-1-phosphate dehydrogenase [NAD(P)+] (351 aa).

Residues 97–101 (GKTID) and 119–122 (TAPS) each bind NAD(+). D124 contributes to the substrate binding site. Residue S128 participates in NAD(+) binding. Position 171 (D171) interacts with substrate. The Zn(2+) site is built by D171 and H251. H255 is a substrate binding site. A Zn(2+)-binding site is contributed by H267.

The protein belongs to the glycerol-1-phosphate dehydrogenase family. As to quaternary structure, homodimer. Zn(2+) serves as cofactor.

It localises to the cytoplasm. The enzyme catalyses sn-glycerol 1-phosphate + NAD(+) = dihydroxyacetone phosphate + NADH + H(+). It carries out the reaction sn-glycerol 1-phosphate + NADP(+) = dihydroxyacetone phosphate + NADPH + H(+). It functions in the pathway membrane lipid metabolism; glycerophospholipid metabolism. In terms of biological role, catalyzes the NAD(P)H-dependent reduction of dihydroxyacetonephosphate (DHAP or glycerone phosphate) to glycerol 1-phosphate (G1P). The G1P thus generated is used as the glycerophosphate backbone of phospholipids in the cellular membranes of Archaea. The sequence is that of Glycerol-1-phosphate dehydrogenase [NAD(P)+] from Metallosphaera sedula (strain ATCC 51363 / DSM 5348 / JCM 9185 / NBRC 15509 / TH2).